Consider the following 145-residue polypeptide: Hemoglobin subunit beta-1 (145 aa).

The Globin domain occupies 1-145 (TFTNDESQHI…VEAALATGYH (145 aa)). Heme b-binding residues include His62 and His91.

This sequence belongs to the globin family. In terms of assembly, major hemoglobin is a tetramer of two alpha-1 chains and two beta-1 chains. Red blood cells.

In terms of biological role, involved in oxygen transport from the lung to the various peripheral tissues. This chain is Hemoglobin subunit beta-1 (HBB1), found in Triturus cristatus (Great crested newt).